A 233-amino-acid chain; its full sequence is Probable chemoreceptor glutamine deamidase CheD (233 aa).

This sequence belongs to the CheD family.

The enzyme catalyses L-glutaminyl-[protein] + H2O = L-glutamyl-[protein] + NH4(+). Functionally, probably deamidates glutamine residues to glutamate on methyl-accepting chemotaxis receptors (MCPs), playing an important role in chemotaxis. The protein is Probable chemoreceptor glutamine deamidase CheD of Ralstonia nicotianae (strain ATCC BAA-1114 / GMI1000) (Ralstonia solanacearum).